Consider the following 540-residue polypeptide: Sterol O-acyltransferase 1 (540 aa).

Positions M1–Q20 are disordered. Topologically, residues M1–I128 are cytoplasmic. S2 is subject to Phosphoserine. H127 provides a ligand contact to cholesterol. The helical transmembrane segment at R129–D150 threads the bilayer. At Y151–K170 the chain is on the lumenal side. A helical membrane pass occupies residues F171–W196. Topologically, residues A197–I208 are cytoplasmic. A helical transmembrane segment spans residues Y209–L234. The Lumenal portion of the chain corresponds to A235 to S242. Residues R243–P266 traverse the membrane as a helical segment. Topologically, residues R267–R309 are cytoplasmic. The chain crosses the membrane as a helical span at residues W310 to I342. The Lumenal segment spans residues K343–S359. A helical membrane pass occupies residues I360 to M385. The Cytoplasmic portion of the chain corresponds to L386–R433. Positions F393–N399 match the FYXDWWN motif motif. An acyl-CoA-binding residues include N405, R408, N411, H415, Y423, K435, and S446. The helical transmembrane segment at F434–L458 threads the bilayer. H450 is an active-site residue. Residues S459–V464 are Lumenal-facing. The chain crosses the membrane as a helical span at residues L465–V480. The Cytoplasmic segment spans residues N481 to R486. Residues P487–C518 form a helical membrane-spanning segment. C518 and C536 are joined by a disulfide. The Lumenal segment spans residues P519–F540.

The protein belongs to the membrane-bound acyltransferase family. Sterol o-acyltransferase subfamily. In terms of assembly, may form homo- or heterodimers. Interacts with UBIAD1.

It is found in the endoplasmic reticulum membrane. The catalysed reaction is a sterol + a long-chain fatty acyl-CoA = a long-chain 3-hydroxysterol ester + CoA. It catalyses the reaction cholesterol + an acyl-CoA = a cholesterol ester + CoA. It carries out the reaction cholesterol + (9Z)-octadecenoyl-CoA = cholesteryl (9Z-octadecenoate) + CoA. The enzyme catalyses cholesterol + hexadecanoyl-CoA = cholesteryl hexadecanoate + CoA. The catalysed reaction is octadecanoyl-CoA + cholesterol = cholesteryl octadecanoate + CoA. It catalyses the reaction (9Z,12Z)-octadecadienoyl-CoA + cholesterol = cholesteryl (9Z,12Z)-octadecadienoate + CoA. It carries out the reaction (5Z,8Z,11Z,14Z)-eicosatetraenoyl-CoA + cholesterol = cholesteryl (5Z,8Z,11Z,14Z)-eicosatetraenoate + CoA. The enzyme catalyses (9Z)-hexadecenoyl-CoA + cholesterol = cholesteryl (9Z)-hexadecenoate + CoA. The catalysed reaction is (11Z)-octadecenoyl-CoA + cholesterol = cholesteryl (11Z)-octadecenoate + CoA. It catalyses the reaction (7Z)-octadecenoyl-CoA + cholesterol = cholesteryl (7Z)-octadecenoate + CoA. In terms of biological role, catalyzes the formation of fatty acid-cholesterol esters, which are less soluble in membranes than cholesterol. Plays a role in lipoprotein assembly and dietary cholesterol absorption. Preferentially utilizes oleoyl-CoA ((9Z)-octadecenoyl-CoA) as a substrate: shows a higher activity towards an acyl-CoA substrate with a double bond at the delta-9 position (9Z) than towards saturated acyl-CoA or an unsaturated acyl-CoA with a double bond at the delta-7 (7Z) or delta-11 (11Z) positions. This chain is Sterol O-acyltransferase 1, found in Mus musculus (Mouse).